Here is a 127-residue protein sequence, read N- to C-terminus: Small ribosomal subunit protein uS11 (127 aa).

Belongs to the universal ribosomal protein uS11 family. In terms of assembly, part of the 30S ribosomal subunit.

Its function is as follows. Located on the platform of the 30S subunit. In Natronomonas pharaonis (strain ATCC 35678 / DSM 2160 / CIP 103997 / JCM 8858 / NBRC 14720 / NCIMB 2260 / Gabara) (Halobacterium pharaonis), this protein is Small ribosomal subunit protein uS11.